The sequence spans 201 residues: Holliday junction branch migration complex subunit RuvA (201 aa).

Residues 1 to 63 (MYDYIKGTVT…EDNISLFGFQ (63 aa)) are domain I. The interval 64 to 142 (TTEERYLFKK…DVVASEIVYV (79 aa)) is domain II. The segment at 143–153 (APENDMVAGLS) is flexible linker. Residues 153 to 201 (SPQLEEAVLALEALGYSTRELKKVIPKLSKEEDLTSDAYIKLALQLMTK) are domain III.

This sequence belongs to the RuvA family. As to quaternary structure, homotetramer. Forms an RuvA(8)-RuvB(12)-Holliday junction (HJ) complex. HJ DNA is sandwiched between 2 RuvA tetramers; dsDNA enters through RuvA and exits via RuvB. An RuvB hexamer assembles on each DNA strand where it exits the tetramer. Each RuvB hexamer is contacted by two RuvA subunits (via domain III) on 2 adjacent RuvB subunits; this complex drives branch migration. In the full resolvosome a probable DNA-RuvA(4)-RuvB(12)-RuvC(2) complex forms which resolves the HJ.

The protein resides in the cytoplasm. Functionally, the RuvA-RuvB-RuvC complex processes Holliday junction (HJ) DNA during genetic recombination and DNA repair, while the RuvA-RuvB complex plays an important role in the rescue of blocked DNA replication forks via replication fork reversal (RFR). RuvA specifically binds to HJ cruciform DNA, conferring on it an open structure. The RuvB hexamer acts as an ATP-dependent pump, pulling dsDNA into and through the RuvAB complex. HJ branch migration allows RuvC to scan DNA until it finds its consensus sequence, where it cleaves and resolves the cruciform DNA. This Listeria monocytogenes serotype 4b (strain CLIP80459) protein is Holliday junction branch migration complex subunit RuvA.